The following is a 963-amino-acid chain: Respiratory burst oxidase homolog protein A (963 aa).

A compositionally biased stretch (basic and acidic residues) spans 1–12 (MRGLPGHERRWT). The interval 1–36 (MRGLPGHERRWTSDTVSSGKDLSGESSPGTDSGNIS) is disordered. At 1–399 (MRGLPGHERR…VYSLQENWKR (399 aa)) the chain is on the cytoplasmic side. Polar residues predominate over residues 13–36 (SDTVSSGKDLSGESSPGTDSGNIS). EF-hand-like stretches follow at residues 219–227 (AKDGYLYRS) and 253–264 (RRLKVDKISKEE). One can recognise an EF-hand domain in the interval 276–311 (SFDSRLQIFFDMVDKNEDGRIGEEEVKEIIMLSASA). Positions 289, 291, 293, 295, and 300 each coordinate Ca(2+). A helical transmembrane segment spans residues 400–420 (IWVLVLWILIMIGLFLWKFYL). Over 421–435 (YKQKSAFQVMGYCLL) the chain is Extracellular. A helical transmembrane segment spans residues 436–456 (TAKGAAETLKFNMALILLPVC). A Ferric oxidoreductase domain is found at 438–595 (KGAAETLKFN…LLIIVYIVLI (158 aa)). Residues 457-482 (RNTITFLRSTKLSCFVPFDDNINFHK) are Cytoplasmic-facing. A helical transmembrane segment spans residues 483-503 (TVAAAIVTGIILHAGNHLVCD). The Extracellular segment spans residues 504-535 (FPKLIHANNTNYQKYLVNDFGPSQPQYIDLVK). A helical membrane pass occupies residues 536–556 (GVEGVTGIIMVILMAIAFTLA). The Cytoplasmic segment spans residues 557 to 583 (TRWFRRSLIKFPKPFDRLTGFNAFWYS). A helical membrane pass occupies residues 584–604 (HHLLIIVYIVLIIHGTFLYLV). Over 605–759 (HNWYSKTTWM…APAQDYRKYD (155 aa)) the chain is Extracellular. The FAD-binding FR-type domain occupies 634 to 754 (SGLYTVRLLK…DGPYGAPAQD (121 aa)). Residues 760–780 (VLLLVGLGIGATPFISILKDL) traverse the membrane as a helical segment. Over 781 to 963 (LKNIVTMEEQ…TKFEFHKEHF (183 aa)) the chain is Cytoplasmic.

It belongs to the RBOH (TC 5.B.1.3) family. Monomer and homodimer. Post-translationally, phosphorylated by CPK.

It localises to the cell membrane. Functionally, calcium-dependent NADPH oxidase that generates superoxide. Involved in the rapid and transient phase I oxidative burst induced by pathogen infection. This is Respiratory burst oxidase homolog protein A (RBOHA) from Solanum tuberosum (Potato).